The sequence spans 156 residues: Putative HTH-type transcriptional regulator YffB (156 aa).

One can recognise an HTH rrf2-type domain in the interval 2–137 (KLSSGWEQSV…SNVSLAQVAD (136 aa)).

The sequence is that of Putative HTH-type transcriptional regulator YffB (yffB) from Lactococcus lactis subsp. lactis (strain IL1403) (Streptococcus lactis).